Reading from the N-terminus, the 191-residue chain is MAVKIIVGLGNPGPKYQWTRHNAGFMVLDRLSHLAGIAISKKTFSGVCGEGNWQGERLILLKPQTFMNLSGRSAAEAIRFHKLPIEDLIVIHDDLDIPFGRVKLKQGGGHAGHNGLRSLAQELGSGDFVRVRVGIGRPVHGDVVNYVLNNFSPEEMASLPRLLDGVVDLVEMLAREGLPKTMSLYNNKDLI.

Residue Tyr16 coordinates tRNA. The active-site Proton acceptor is His21. TRNA contacts are provided by Phe66, Asn68, and Asn114.

The protein belongs to the PTH family. In terms of assembly, monomer.

Its subcellular location is the cytoplasm. The catalysed reaction is an N-acyl-L-alpha-aminoacyl-tRNA + H2O = an N-acyl-L-amino acid + a tRNA + H(+). Functionally, hydrolyzes ribosome-free peptidyl-tRNAs (with 1 or more amino acids incorporated), which drop off the ribosome during protein synthesis, or as a result of ribosome stalling. In terms of biological role, catalyzes the release of premature peptidyl moieties from peptidyl-tRNA molecules trapped in stalled 50S ribosomal subunits, and thus maintains levels of free tRNAs and 50S ribosomes. The polypeptide is Peptidyl-tRNA hydrolase (Geotalea daltonii (strain DSM 22248 / JCM 15807 / FRC-32) (Geobacter daltonii)).